We begin with the raw amino-acid sequence, 141 residues long: Hemoglobin subunit alpha-D (141 aa).

Positions 1–141 constitute a Globin domain; sequence MLTADDKKIL…VAAVLAEKYR (141 aa). Residues His58 and His87 each contribute to the heme b site.

This sequence belongs to the globin family. In terms of assembly, heterotetramer of two alpha-D chains and two beta chains. Red blood cells.

Involved in oxygen transport from the lung to the various peripheral tissues. The sequence is that of Hemoglobin subunit alpha-D (HBAD) from Branta canadensis (Canada goose).